The primary structure comprises 677 residues: mRNA 3'-end-processing protein RNA14 (677 aa).

HAT repeat units lie at residues 56–88 (ESYA…GELA), 90–124 (DEFE…YIRR), 138–170 (VIVK…FLEQ), 181–214 (QRID…WEQE), 257–289 (RTAN…WERE), and 298–330 (MLSQ…YISE).

In terms of assembly, component of the CFIA complex, which is composed of RNA14, RNA15, PCF11 and CLP1. Interacts with FIP1, PFS2, YSH1 and probably also with RNA15. Probably interacts with the phosphorylated CTD domain of RPB1/RNA polymerase II.

It is found in the nucleus. The protein localises to the cytoplasm. In terms of biological role, component of the cleavage factor IA (CFIA) complex, which is involved in the endonucleolytic cleavage during polyadenylation-dependent pre-mRNA 3'-end formation and cooperates with the cleavage factor NAB4/CFIB and the cleavage and polyadenylation factor (CPF) complex. The polypeptide is mRNA 3'-end-processing protein RNA14 (RNA14) (Saccharomyces cerevisiae (strain ATCC 204508 / S288c) (Baker's yeast)).